The following is a 119-amino-acid chain: Large ribosomal subunit protein uL18 (119 aa).

It belongs to the universal ribosomal protein uL18 family. Part of the 50S ribosomal subunit; part of the 5S rRNA/L5/L18/L25 subcomplex. Contacts the 5S and 23S rRNAs.

Functionally, this is one of the proteins that bind and probably mediate the attachment of the 5S RNA into the large ribosomal subunit, where it forms part of the central protuberance. The protein is Large ribosomal subunit protein uL18 of Xanthomonas campestris pv. campestris (strain 8004).